A 146-amino-acid polypeptide reads, in one-letter code: Transcriptional regulator MraZ (146 aa).

2 SpoVT-AbrB domains span residues 5–50 (SSFH…TFNE) and 77–120 (ACEC…SREQ).

It belongs to the MraZ family. As to quaternary structure, forms oligomers.

The protein resides in the cytoplasm. The protein localises to the nucleoid. The chain is Transcriptional regulator MraZ from Desulforapulum autotrophicum (strain ATCC 43914 / DSM 3382 / VKM B-1955 / HRM2) (Desulfobacterium autotrophicum).